Consider the following 272-residue polypeptide: Putative pyruvate, phosphate dikinase regulatory protein 1 (272 aa).

151 to 158 (GISRTSKT) provides a ligand contact to ADP.

The protein belongs to the pyruvate, phosphate/water dikinase regulatory protein family. PDRP subfamily.

It catalyses the reaction N(tele)-phospho-L-histidyl/L-threonyl-[pyruvate, phosphate dikinase] + ADP = N(tele)-phospho-L-histidyl/O-phospho-L-threonyl-[pyruvate, phosphate dikinase] + AMP + H(+). The enzyme catalyses N(tele)-phospho-L-histidyl/O-phospho-L-threonyl-[pyruvate, phosphate dikinase] + phosphate + H(+) = N(tele)-phospho-L-histidyl/L-threonyl-[pyruvate, phosphate dikinase] + diphosphate. Bifunctional serine/threonine kinase and phosphorylase involved in the regulation of the pyruvate, phosphate dikinase (PPDK) by catalyzing its phosphorylation/dephosphorylation. The protein is Putative pyruvate, phosphate dikinase regulatory protein 1 of Staphylococcus epidermidis (strain ATCC 35984 / DSM 28319 / BCRC 17069 / CCUG 31568 / BM 3577 / RP62A).